Consider the following 175-residue polypeptide: NADH dehydrogenase [ubiquinone] iron-sulfur protein 4, mitochondrial (175 aa).

Residues 1-42 (MAAVSISVSLRQAMLGRRAMATAAVSVCRVPSRLLSTSTWKL) constitute a mitochondrion transit peptide. The residue at position 173 (Ser173) is a Phosphoserine.

This sequence belongs to the complex I NDUFS4 subunit family. As to quaternary structure, this is a component of the iron-sulfur (IP) fragment of the enzyme. Interacts with BCAP31 and TOMM40; the interaction mediates its translocation to the mitochondria; the interaction with BCAP31 is direct.

It is found in the mitochondrion inner membrane. Functionally, accessory subunit of the mitochondrial membrane respiratory chain NADH dehydrogenase (Complex I), that is believed not to be involved in catalysis. Complex I functions in the transfer of electrons from NADH to the respiratory chain. The immediate electron acceptor for the enzyme is believed to be ubiquinone. The sequence is that of NADH dehydrogenase [ubiquinone] iron-sulfur protein 4, mitochondrial (Ndufs4) from Mus musculus (Mouse).